We begin with the raw amino-acid sequence, 220 residues long: Adenylate kinase (220 aa).

G10–T15 contacts ATP. Residues S30 to V59 form an NMP region. Residues T31, R36, K57–V59, G85–R88, and Q92 contribute to the AMP site. The disordered stretch occupies residues G122–G150. An LID region spans residues G122–D159. ATP-binding positions include R123 and T132 to Y133. Residues R156 and R167 each coordinate AMP. An ATP-binding site is contributed by G206.

This sequence belongs to the adenylate kinase family. In terms of assembly, monomer.

The protein localises to the cytoplasm. The enzyme catalyses AMP + ATP = 2 ADP. The protein operates within purine metabolism; AMP biosynthesis via salvage pathway; AMP from ADP: step 1/1. Catalyzes the reversible transfer of the terminal phosphate group between ATP and AMP. Plays an important role in cellular energy homeostasis and in adenine nucleotide metabolism. In Burkholderia ambifaria (strain MC40-6), this protein is Adenylate kinase.